Here is a 410-residue protein sequence, read N- to C-terminus: Arginine deiminase (410 aa).

Residue Cys-398 is the Amidino-cysteine intermediate of the active site.

The protein belongs to the arginine deiminase family. In terms of assembly, homodimer.

The protein resides in the cytoplasm. It carries out the reaction L-arginine + H2O = L-citrulline + NH4(+). Its pathway is amino-acid degradation; L-arginine degradation via ADI pathway; carbamoyl phosphate from L-arginine: step 1/2. In Mycoplasmopsis arginini (Mycoplasma arginini), this protein is Arginine deiminase (arcA).